A 402-amino-acid chain; its full sequence is Prostaglandin E2 receptor EP1 subtype (402 aa).

Residues 1–35 (MSPCGPLNLSLAGEATTCAAPWVPNTSAVPPSGAS) are Extracellular-facing. 2 N-linked (GlcNAc...) asparagine glycosylation sites follow: Asn8 and Asn25. A helical membrane pass occupies residues 36–62 (PALPIFSMTLGAVSNLLALALLAQAAG). The Cytoplasmic portion of the chain corresponds to 63–72 (RLRRRRSAAT). Residues 73–96 (FLLFVASLLATDLAGHVIPGALVL) traverse the membrane as a helical segment. The Extracellular portion of the chain corresponds to 97–111 (RLYTAGRAPAGGACH). Cys110 and Cys188 are oxidised to a cystine. The helical transmembrane segment at 112–133 (FLGGCMVFFGLCPLLLGCGMAV) threads the bilayer. Topologically, residues 134–155 (ERCVGVTRPLLHAARVSVARAR) are cytoplasmic. Residues 156 to 177 (LALAAVAAVALAVALLPLARVG) form a helical membrane-spanning segment. Residues 178 to 201 (RYELQYPGTWCFIGLGPPGGWRQA) lie on the Extracellular side of the membrane. Residues 202–227 (LLAGLFASLGLVALLAALVCNTLSGL) form a helical membrane-spanning segment. Topologically, residues 228–294 (ALLRARWRRR…ARRARAHDVE (67 aa)) are cytoplasmic. Positions 238–266 (SRRPPPASGPDSRRRWGAHGPRSASASSA) are disordered. A helical transmembrane segment spans residues 295-321 (MVGQLVGIMVVSCICWSPMLVLVALAV). Residues 322–332 (GGWSSTSLQRP) are Extracellular-facing. Residues 333–354 (LFLAVRLASWNQILDPWVYILL) form a helical membrane-spanning segment. The Cytoplasmic portion of the chain corresponds to 355 to 402 (RQAVLRQLLRLLPPRAGAKGGPAGLGLTPSAWEASSLRSSRHSGLSHF).

This sequence belongs to the G-protein coupled receptor 1 family. In terms of processing, phosphorylated. Abundant in kidney. Lower level expression in lung, skeletal muscle and spleen, lowest expression in testis and not detected in liver brain and heart.

Its subcellular location is the cell membrane. Functionally, receptor for prostaglandin E2 (PGE2). The activity of this receptor is mediated by G(q) proteins which activate a phosphatidylinositol-calcium second messenger system. May play a role as an important modulator of renal function. Implicated the smooth muscle contractile response to PGE2 in various tissues. The protein is Prostaglandin E2 receptor EP1 subtype (PTGER1) of Homo sapiens (Human).